A 602-amino-acid polypeptide reads, in one-letter code: Solute carrier organic anion transporter family member 1C1 (602 aa).

The Cytoplasmic portion of the chain corresponds to methionine 1–lysine 43. A helical transmembrane segment spans residues valine 44–leucine 63. Residues lysine 64 to glycine 82 are Extracellular-facing. A helical membrane pass occupies residues valine 83–glycine 103. The Cytoplasmic portion of the chain corresponds to alanine 104–proline 109. A helical transmembrane segment spans residues lysine 110–glutamate 134. Residues glutamine 135–glutamate 139 are Extracellular-facing. Residues isoleucine 140–leucine 156 traverse the membrane as a helical segment. The Cytoplasmic segment spans residues glutamate 157–tyrosine 238. The interval proline 190–glutamine 216 is disordered. Basic and acidic residues predominate over residues glutamine 193 to aspartate 214. A helical transmembrane segment spans residues leucine 239 to phenylalanine 260. Topologically, residues glycine 261–arginine 280 are extracellular. Residues alanine 281–methionine 304 form a helical membrane-spanning segment. Residues lysine 305–arginine 308 lie on the Cytoplasmic side of the membrane. The chain crosses the membrane as a helical span at residues isoleucine 309–leucine 332. The Extracellular portion of the chain corresponds to phenylalanine 333–phenylalanine 444. Positions arginine 360–glycine 415 constitute a Kazal-like domain. 3 disulfides stabilise this stretch: cysteine 366–cysteine 396, cysteine 372–cysteine 392, and cysteine 381–cysteine 413. Residues asparagine 400, asparagine 410, and asparagine 423 are each glycosylated (N-linked (GlcNAc...) asparagine). A helical membrane pass occupies residues leucine 445–leucine 467. Residues arginine 468–serine 476 lie on the Cytoplasmic side of the membrane. Residues phenylalanine 477–isoleucine 502 traverse the membrane as a helical segment. Residues aspartate 503–threonine 536 are Extracellular-facing. A helical transmembrane segment spans residues valine 537–leucine 554. Over lysine 555 to leucine 602 the chain is Cytoplasmic.

It belongs to the organo anion transporter (TC 2.A.60) family.

The protein localises to the cell membrane. The catalysed reaction is 3,3',5'-triiodo-L-thyronine(out) = 3,3',5'-triiodo-L-thyronine(in). It carries out the reaction L-thyroxine(out) = L-thyroxine(in). It catalyses the reaction L-thyroxine sulfate(out) = L-thyroxine sulfate(in). Functionally, mediates the Na(+)-independent high affinity transport of organic anions such as the thyroid hormones L-thyroxine (T4), L-thyroxine sulfate (T4S), and 3,3',5'-triiodo-L-thyronine (reverse T3, rT3) at the plasma membrane. Regulates T4 levels in different brain regions by transporting T4, and also by serving as an export pump for T4S, which is a source of T4 after hydrolysis by local sulfatases. Increases the access of these substrates to the intracellular sites where they are metabolized by the deiodinases. Other potential substrates, such as triiodothyronine (T3), 17-beta-glucuronosyl estradiol (17beta-estradiol 17-O-(beta-D-glucuronate)), estrone-3-sulfate (E1S) and sulfobromophthalein (BSP) are transported with much lower efficiency. Transports T4 and E1S in a pH-insensitive manner. Facilitates the transport of thyroid hormones across the blood-brain barrier and into glia and neuronal cells in the brain. The chain is Solute carrier organic anion transporter family member 1C1 (SLCO1C1) from Macaca fascicularis (Crab-eating macaque).